The sequence spans 309 residues: 2-phosphoglycerate kinase (309 aa).

The region spanning 5-92 (NDIIVRGKSY…LWRMVLGRRP (88 aa)) is the ATP-cone domain.

Belongs to the 2-phosphoglycerate kinase family. It depends on a divalent metal cation as a cofactor.

It carries out the reaction (2R)-2-phosphoglycerate + ATP = (2R)-2,3-bisphosphoglycerate + ADP + H(+). Its pathway is thermoadapter biosynthesis; cyclic 2,3-diphosphoglycerate biosynthesis; cyclic 2,3-diphosphoglycerate from 2-phospho-D-glycerate: step 1/2. Functionally, catalyzes the phosphorylation of 2-phosphoglycerate to 2,3-diphosphoglycerate. Involved in the biosynthesis of cyclic 2,3-bisphosphoglycerate, a thermoprotectant. The protein is 2-phosphoglycerate kinase of Methanocaldococcus jannaschii (strain ATCC 43067 / DSM 2661 / JAL-1 / JCM 10045 / NBRC 100440) (Methanococcus jannaschii).